The primary structure comprises 54 residues: Lectin alpha-1 chain (54 aa).

The protein belongs to the leguminous lectin family. In terms of assembly, tetramer of two alpha and two beta chains.

The protein is Lectin alpha-1 chain of Lathyrus cicera (Flat-pod pea).